The primary structure comprises 427 residues: Gamma-glutamyl phosphate reductase (427 aa).

Belongs to the gamma-glutamyl phosphate reductase family.

Its subcellular location is the cytoplasm. It catalyses the reaction L-glutamate 5-semialdehyde + phosphate + NADP(+) = L-glutamyl 5-phosphate + NADPH + H(+). Its pathway is amino-acid biosynthesis; L-proline biosynthesis; L-glutamate 5-semialdehyde from L-glutamate: step 2/2. Functionally, catalyzes the NADPH-dependent reduction of L-glutamate 5-phosphate into L-glutamate 5-semialdehyde and phosphate. The product spontaneously undergoes cyclization to form 1-pyrroline-5-carboxylate. This is Gamma-glutamyl phosphate reductase from Rhizobium etli (strain CIAT 652).